We begin with the raw amino-acid sequence, 367 residues long: MPRPITAVIHRQALQNNLAVVRKAMPNSKVFAVVKANAYGHGIERVYEAFKAADGFALLDLEEAKRIRALGWTGPILLLEGVFSPQDLFDCVQYQLSFTIHSEAQIEWVEQHPYPAQFDVFLKMNSGMSRLGFKPQHYVQAWERLNNLANVAKITHMMHFSDADGDRFGQQGIDYQITAFEEIVKDLPGERSVSNSAAILRYQDQLKSDYVRSGIMLYGSSPDYPTHSIADWGLQPTMSLRSEIISVQHLEPNESVGYGSNFVAEQPMTIGIVACGYADGYQRISPTGTPVLVDSVRTRTVGRVSMDMLAVDLTGIESAKVGSEVVLWGQSSTGVVLPIDDVAVSSGTVGYELMCAVTARVQFINQV.

The active-site Proton acceptor; specific for D-alanine is the Lys-35. At Lys-35 the chain carries N6-(pyridoxal phosphate)lysine. Arg-130 provides a ligand contact to substrate. The active-site Proton acceptor; specific for L-alanine is Tyr-258. A substrate-binding site is contributed by Met-306.

The protein belongs to the alanine racemase family. It depends on pyridoxal 5'-phosphate as a cofactor.

It carries out the reaction L-alanine = D-alanine. It participates in amino-acid biosynthesis; D-alanine biosynthesis; D-alanine from L-alanine: step 1/1. Catalyzes the interconversion of L-alanine and D-alanine. May also act on other amino acids. This is Alanine racemase (alr) from Acinetobacter baumannii (strain SDF).